A 109-amino-acid polypeptide reads, in one-letter code: Spermidine export protein MdtI (109 aa).

Helical transmembrane passes span 6-26 (WVHGAWLALAIILEIAANVLL), 36-56 (CYGILSLAAVLAAFSALSQAV), 64-84 (AYALWGGFGIAATLAAGWVLF), and 88-108 (LNPKGWVGVVLLLVGMIMIKL).

The protein belongs to the drug/metabolite transporter (DMT) superfamily. Small multidrug resistance (SMR) (TC 2.A.7.1) family. MdtI subfamily. In terms of assembly, forms a complex with MdtJ.

Its subcellular location is the cell inner membrane. Its function is as follows. Catalyzes the excretion of spermidine. This Salmonella arizonae (strain ATCC BAA-731 / CDC346-86 / RSK2980) protein is Spermidine export protein MdtI.